The primary structure comprises 348 residues: MISVSRFLSPQFYAIPRSFVKMSASATQTAGEVSMGIKPPSHPTYDLKAVIKLALAEDAGHTGDVTCMATIPFDMEVEAYFLAKEDGIVAGVALADMIFEHVDPSLKVEWMRKDGDYVHKGLKFGKVSGNAHKIVVAERVLLNFMQRMSGIATLTKLMADAASPACILETRKTAPGLRLVDKWAVLIGGGRNHRMGLFDMVMIKDNHISAAGGIVNAVKSVDEYLKQKNLEMDVEVETRTLEEVKEVLEYASGSETRLTRIMLDNMVVPLENGDVDVTMLKDAVELINGRFETEASGNVTLETVHKIGQSGVTFISSGALTHSVKALDISLKIDTELALEVGRRTKRA.

A chloroplast-targeting transit peptide spans 1-41; sequence MISVSRFLSPQFYAIPRSFVKMSASATQTAGEVSMGIKPPS. Substrate-binding positions include Arg-139, 170–172, Arg-194, Lys-204, Glu-237, Asp-264, 296–298, and 317–319; these read TRK, SGN, and SGA.

This sequence belongs to the NadC/ModD family.

It is found in the plastid. The protein resides in the chloroplast. The catalysed reaction is nicotinate beta-D-ribonucleotide + CO2 + diphosphate = quinolinate + 5-phospho-alpha-D-ribose 1-diphosphate + 2 H(+). Its pathway is cofactor biosynthesis; NAD(+) biosynthesis; nicotinate D-ribonucleotide from quinolinate: step 1/1. Involved in the biosynthesis of NAD(+). Catalyzes the conversion of quinolate to nicotinate to nicotinate beta-D-ribonucleotide. This Arabidopsis thaliana (Mouse-ear cress) protein is Nicotinate-nucleotide pyrophosphorylase [carboxylating], chloroplastic.